We begin with the raw amino-acid sequence, 963 residues long: Phosphofurin acidic cluster sorting protein 1 (963 aa).

The segment covering 1-22 (MAERGGAGGGPGGAGGGSGQRG) has biased composition (gly residues). Disordered stretches follow at residues 1-72 (MAER…SSST) and 78-97 (VAVA…RTPA). At A2 the chain carries N-acetylalanine. S28 carries the post-translational modification Phosphoserine. T46 bears the Phosphothreonine mark. Positions 53-72 (ATSSSSSTSAAAASSSSSST) are enriched in low complexity. An involved in binding to AP-1 region spans residues 168–175 (ETELQLTF). Phosphotyrosine is present on Y251. Positions 262-273 (GIKSKLSDRSPD) are enriched in basic and acidic residues. Disordered regions lie at residues 262 to 299 (GIKS…LHGQ) and 377 to 428 (NPSD…GKDT). Over residues 276-293 (NYSEEEEESFSSEQEGSD) the composition is skewed to acidic residues. The stretch at 353-377 (HVSREQIREVEEDLDELYDSLEMYN) forms a coiled coil. Phosphoserine is present on residues S379 and S381. Residues 406–428 (MSQSSSQTEIGSLNSKGSLGKDT) are compositionally biased toward polar residues. A phosphoserine mark is found at S430 and S495. Disordered regions lie at residues 476 to 542 (PEKV…HSTQ) and 760 to 804 (SPST…SMSS). Over residues 483–496 (MKSSKTDLQGSASP) the composition is skewed to polar residues. At T504 the chain carries Phosphothreonine. Phosphoserine occurs at positions 519, 528, 529, 531, and 534. Over residues 770 to 804 (SPVVSLTVPSTSPPSSSGLSRDATATPPSSPSMSS) the composition is skewed to low complexity.

The protein belongs to the PACS family. In terms of assembly, associates with AP-1 and AP-3 but not with AP-2 complexes. Interacts with FURIN. Forms a ternary complex with FURIN and AP-1. Interacts with NPHP1; the interaction is dependent of NPHP1 phosphorylation by CK2. Interacts with PKD2 (via acidic region). Interacts with SORL1. Interacts with WDR37. (Microbial infection) Interacts with HIV-1 Nef. As to quaternary structure, (Microbial infection) Interacts with Epstein-barr virus protein BBLF1.

It localises to the golgi apparatus. The protein localises to the trans-Golgi network. Coat protein that is involved in the localization of trans-Golgi network (TGN) membrane proteins that contain acidic cluster sorting motifs. Controls the endosome-to-Golgi trafficking of furin and mannose-6-phosphate receptor by connecting the acidic-cluster-containing cytoplasmic domain of these molecules with the adapter-protein complex-1 (AP-1) of endosomal clathrin-coated membrane pits. Involved in HIV-1 nef-mediated removal of MHC-I from the cell surface to the TGN. Required for normal ER Ca2+ handling in lymphocytes. Together with WDR37, it plays an essential role in lymphocyte development, quiescence and survival. Required for stabilizing peripheral lymphocyte populations. This Homo sapiens (Human) protein is Phosphofurin acidic cluster sorting protein 1 (PACS1).